The sequence spans 460 residues: DL-alanine permease SerP2 (460 aa).

Helical transmembrane passes span 26–46, 47–67, 98–118, 124–144, 160–180, 209–229, 246–266, 278–298, 344–364, 368–388, 410–430, and 433–453; these read LIAI…KSIH, LTGP…YILL, FIQW…LIAI, FWLP…LLTL, FGMI…ILIF, FFES…IGMT, QIPI…MSIY, FVTI…NFVV, ALLF…IPAI, FVFI…MTLI, HIFI…LFCF, and TIIP…FTFF.

Belongs to the amino acid-polyamine-organocation (APC) superfamily. Amino acid transporter (AAT) (TC 2.A.3.1) family.

It localises to the cell membrane. In terms of biological role, transports DL-alanine, DL-serine and glycine. The preferred substrate is DL-alanine. L-serine is a low-affinity substrate. In Lactococcus lactis subsp. cremoris (strain MG1363), this protein is DL-alanine permease SerP2.